The following is a 315-amino-acid chain: Pantothenate kinase (315 aa).

An ATP-binding site is contributed by 94-101 (GSVAVGKS).

It belongs to the prokaryotic pantothenate kinase family.

The protein resides in the cytoplasm. It catalyses the reaction (R)-pantothenate + ATP = (R)-4'-phosphopantothenate + ADP + H(+). It participates in cofactor biosynthesis; coenzyme A biosynthesis; CoA from (R)-pantothenate: step 1/5. This chain is Pantothenate kinase, found in Citrobacter koseri (strain ATCC BAA-895 / CDC 4225-83 / SGSC4696).